Reading from the N-terminus, the 638-residue chain is Chaperone protein DnaK (638 aa).

Threonine 197 is subject to Phosphothreonine; by autocatalysis. Residues 600–638 (SGAQGGAQAGPGAGAGQQANQGSSNNKEDIQDADFEEVK) form a disordered region. Gly residues predominate over residues 602–614 (AQGGAQAGPGAGA). Residues 615–624 (GQQANQGSSN) are compositionally biased toward low complexity. The segment covering 625–638 (NKEDIQDADFEEVK) has biased composition (basic and acidic residues).

It belongs to the heat shock protein 70 family.

Functionally, acts as a chaperone. The protein is Chaperone protein DnaK of Phocaeicola vulgatus (strain ATCC 8482 / DSM 1447 / JCM 5826 / CCUG 4940 / NBRC 14291 / NCTC 11154) (Bacteroides vulgatus).